The chain runs to 704 residues: D-(-)-3-hydroxybutyrate oligomer hydrolase (704 aa).

Positions 1-31 (MTTTNRNNLKLTALTAAVLTLSACGGSDAVA) are cleaved as a signal peptide. Ser309 functions as the Charge relay system in the catalytic mechanism.

It belongs to the D-(-)-3-hydroxybutyrate oligomer hydrolase family.

Its subcellular location is the secreted. The enzyme catalyses (3R)-hydroxybutanoate dimer + H2O = 2 (R)-3-hydroxybutanoate + H(+). The protein operates within lipid metabolism; butanoate metabolism. Its function is as follows. Participates in the degradation of poly-3-hydroxybutyrate (PHB). It works downstream of poly(3-hydroxybutyrate) depolymerase, hydrolyzing D(-)-3-hydroxybutyrate oligomers of various length (3HB-oligomers) into 3HB-monomers. The sequence is that of D-(-)-3-hydroxybutyrate oligomer hydrolase from Albidiferax ferrireducens (strain ATCC BAA-621 / DSM 15236 / T118) (Rhodoferax ferrireducens).